The primary structure comprises 386 residues: Patatin (386 aa).

Positions 1–23 are cleaved as a signal peptide; it reads MATTKSFLILFFMILATTSSTCA. Positions 32 to 229 constitute a PNPLA domain; it reads LSIDGGGIKG…TVGDPALLSL (198 aa). The GXGXXG motif lies at 36–41; the sequence is GGGIKG. The short motif at 75-79 is the GXSXG element; it reads GTSTG. The active-site Nucleophile is the Ser-77. N-linked (GlcNAc...) asparagine glycosylation is present at Asn-115. Asp-215 acts as the Proton acceptor in catalysis. Residues 215 to 217 carry the DGA/G motif; that stretch reads DGA.

It belongs to the patatin family.

It is found in the vacuole. Functionally, probable lipolytic acyl hydrolase (LAH), an activity which is thought to be involved in the response of tubers to pathogens. This Solanum tuberosum (Potato) protein is Patatin.